The chain runs to 305 residues: Ribonuclease Z (305 aa).

Zn(2+)-binding residues include His-61, His-63, Asp-65, His-66, His-138, Asp-208, and His-266. The active-site Proton acceptor is the Asp-65.

The protein belongs to the RNase Z family. Homodimer. Zn(2+) serves as cofactor.

It catalyses the reaction Endonucleolytic cleavage of RNA, removing extra 3' nucleotides from tRNA precursor, generating 3' termini of tRNAs. A 3'-hydroxy group is left at the tRNA terminus and a 5'-phosphoryl group is left at the trailer molecule.. Its function is as follows. Zinc phosphodiesterase, which displays some tRNA 3'-processing endonuclease activity. Probably involved in tRNA maturation, by removing a 3'-trailer from precursor tRNA. In Methanosarcina mazei (strain ATCC BAA-159 / DSM 3647 / Goe1 / Go1 / JCM 11833 / OCM 88) (Methanosarcina frisia), this protein is Ribonuclease Z.